A 219-amino-acid polypeptide reads, in one-letter code: Aspartic protease inhibitor 10 (219 aa).

The N-terminal stretch at 1-23 is a signal peptide; that stretch reads MMKCLFLLCLCLVPIVVFSSTFT. Positions 24-32 are excised as a propeptide; the sequence is SQNLIDLPS. A Vacuolar targeting signal motif is present at residues 26 to 31; it reads NLIDLP. The N-linked (GlcNAc...) asparagine glycan is linked to asparagine 51. 2 disulfide bridges follow: cysteine 80/cysteine 125 and cysteine 173/cysteine 184.

The protein belongs to the protease inhibitor I3 (leguminous Kunitz-type inhibitor) family. In terms of tissue distribution, in tubers and green buds of untreated plants. After abscisic acid treatment or mechanical wounding is mostly accumulated in leaves, to a lesser extent in stems, but not in roots.

Functionally, inhibitor of cathepsin D (aspartic protease) and trypsin (serine protease). Protects the plant by inhibiting proteases of invading organisms. This Solanum tuberosum (Potato) protein is Aspartic protease inhibitor 10 (CDI).